The following is a 160-amino-acid chain: Cytochrome b6-f complex subunit 4 (160 aa).

The next 3 membrane-spanning stretches (helical) occupy residues 36 to 56 (LLYIFPVVILGTIACVVGLAV), 95 to 115 (LLGIALQTLIPLGLMILPFIE), and 131 to 151 (VVFLFGTFLTIYLGIGACLPI).

The protein belongs to the cytochrome b family. PetD subfamily. As to quaternary structure, the 4 large subunits of the cytochrome b6-f complex are cytochrome b6, subunit IV (17 kDa polypeptide, PetD), cytochrome f and the Rieske protein, while the 4 small subunits are PetG, PetL, PetM and PetN. The complex functions as a dimer.

Its subcellular location is the cellular thylakoid membrane. In terms of biological role, component of the cytochrome b6-f complex, which mediates electron transfer between photosystem II (PSII) and photosystem I (PSI), cyclic electron flow around PSI, and state transitions. The protein is Cytochrome b6-f complex subunit 4 of Prochlorococcus marinus (strain MIT 9515).